The chain runs to 65 residues: Gallinacin-1 alpha (65 aa).

A signal peptide spans 1–19; the sequence is MRIVYLLLPFILLLAQGAA. Positions 20–25 are excised as a propeptide; it reads GSSQAL. 3 disulfide bridges follow: Cys31–Cys59, Cys38–Cys53, and Cys43–Cys60.

This sequence belongs to the beta-defensin family.

It localises to the secreted. The protein resides in the cytoplasmic granule. In terms of biological role, has bactericidal activity. Potent activity against E.coli ML-35, L.monocytogenes EGD and C.albicans. The chain is Gallinacin-1 alpha from Gallus gallus (Chicken).